We begin with the raw amino-acid sequence, 370 residues long: Queuine tRNA-ribosyltransferase (370 aa).

Asp-93 (proton acceptor) is an active-site residue. Residues 93 to 97 (DSGGF), Asp-147, Gln-190, and Gly-217 contribute to the substrate site. The interval 248 to 254 (GVGTPDY) is RNA binding. The active-site Nucleophile is the Asp-267. An RNA binding; important for wobble base 34 recognition region spans residues 272–276 (TRVAR). Cys-305, Cys-307, Cys-310, and His-336 together coordinate Zn(2+).

The protein belongs to the queuine tRNA-ribosyltransferase family. In terms of assembly, homodimer. Within each dimer, one monomer is responsible for RNA recognition and catalysis, while the other monomer binds to the replacement base PreQ1. Requires Zn(2+) as cofactor.

The catalysed reaction is 7-aminomethyl-7-carbaguanine + guanosine(34) in tRNA = 7-aminomethyl-7-carbaguanosine(34) in tRNA + guanine. The protein operates within tRNA modification; tRNA-queuosine biosynthesis. Its function is as follows. Catalyzes the base-exchange of a guanine (G) residue with the queuine precursor 7-aminomethyl-7-deazaguanine (PreQ1) at position 34 (anticodon wobble position) in tRNAs with GU(N) anticodons (tRNA-Asp, -Asn, -His and -Tyr). Catalysis occurs through a double-displacement mechanism. The nucleophile active site attacks the C1' of nucleotide 34 to detach the guanine base from the RNA, forming a covalent enzyme-RNA intermediate. The proton acceptor active site deprotonates the incoming PreQ1, allowing a nucleophilic attack on the C1' of the ribose to form the product. After dissociation, two additional enzymatic reactions on the tRNA convert PreQ1 to queuine (Q), resulting in the hypermodified nucleoside queuosine (7-(((4,5-cis-dihydroxy-2-cyclopenten-1-yl)amino)methyl)-7-deazaguanosine). In Natranaerobius thermophilus (strain ATCC BAA-1301 / DSM 18059 / JW/NM-WN-LF), this protein is Queuine tRNA-ribosyltransferase.